We begin with the raw amino-acid sequence, 187 residues long: MLLEKSLEEAPVVNRNGYWYFIHPITDGVPELPPELLREVAYRIVRALDSTDFDKIVCVEAMGIHLGALLSDMLDRPLVIVRKREYGLDGEVEITQEKGYGVEKLYLNGVSEGDRVVVVDDVISTGGTLVGLINALDDVGAEIEDVVVVVARGGLDRVREETGVDVKYLVRVEVSEDGVSVVESRYR.

It belongs to the purine/pyrimidine phosphoribosyltransferase family. Archaeal HPRT subfamily. Homodimer.

It localises to the cytoplasm. It catalyses the reaction IMP + diphosphate = hypoxanthine + 5-phospho-alpha-D-ribose 1-diphosphate. The enzyme catalyses GMP + diphosphate = guanine + 5-phospho-alpha-D-ribose 1-diphosphate. It functions in the pathway purine metabolism; IMP biosynthesis via salvage pathway; IMP from hypoxanthine: step 1/1. Catalyzes a salvage reaction resulting in the formation of IMP that is energically less costly than de novo synthesis. This Methanopyrus kandleri (strain AV19 / DSM 6324 / JCM 9639 / NBRC 100938) protein is Hypoxanthine/guanine phosphoribosyltransferase.